Consider the following 680-residue polypeptide: MEESSLSRAPSRGGVNFLNVARTYIPNTKVECHYTLPPGTVPSASDWIGIFKVEAACVRDYHTFVWSLVPESVTDGSPIHASVQFQASYLPKPGAQLYQFRYVNRQGRVCGQSPPFQFREPRPMDELVTLEETDGGSDILLVVPKATVLQNQLDESQQERNDLMQLKLQLEGQVTELKSQVQELEKALAAARQEHAELAEQYKGLSRSHGELTEERDILSRQQGDHVARILELEEDIQTISEKVLMKEVELDRVRDSVKALTREQEKLLGQLKEVQADKEQSEAELQMAQQENRRLNLELQEAKDRQEEQSAQAQRLKDKVAQMKDTLGQVQQRVAELEPLKEQLRGAQELAASSQQKAALLGEELASAAGARDRTIAELHRSRLEVAGVNGRLAELSLHLKEEKSQWSKERAGLLQSVEAEKDKILKLSAEILRLEKAVQEEKTQSQVFKTELAREKDSSLVQLSESKRELTELRSALRVLQKEKEQLQEEKQELLEYMRKLEARLEKVADEKWSEDPATEDEEAAVGLSCPAALTDSEDESPEDMRLPPYSLCESGDSGSSPATGPREASPLVVISQPAPIAPQLSGPAEDSSSDSEAEDEKSVLMAAVQSGGEEANLLLPELGSAFYDMASGFAVGPLTEASTGGPATPPWKECPICKERFPVHTQTHTYTHTHTHA.

Positions 1-30 (MEESSLSRAPSRGGVNFLNVARTYIPNTKV) are p300 KIX-binding. Residues 1–190 (MEESSLSRAP…VQELEKALAA (190 aa)) form an N-terminal AD (CTNNB1 binding site) region. Ser-4 carries the phosphoserine modification. Residues 45–125 (SDWIGIFKVE…FQFREPRPMD (81 aa)) are interaction with GATA1. 3 coiled-coil regions span residues 145–205 (KATV…YKGL), 232–339 (ELEE…AELE), and 417–514 (QSVE…ADEK). The interval 501–680 (RKLEARLEKV…HTYTHTHTHA (180 aa)) is C-terminal AD (CTNNB1 binding site); interaction with CCAR1. The disordered stretch occupies residues 511–606 (ADEKWSEDPA…DSEAEDEKSV (96 aa)). A UBZ1-type zinc finger spans residues 654-679 (WKECPICKERFPVHTQTHTYTHTHTH). 4 residues coordinate Zn(2+): Cys-657, Cys-660, His-675, and His-679.

This sequence belongs to the CALCOCO family. As to quaternary structure, part of a calphoglin complex consisting of CALCOCO1, PPA1 and PGM. Interacts with the bHLH-PAS domains of GRIP1, AHR and ARNT. Interacts with CTNNB1 via both its N- and C-terminal regions. Interacts with EP300. Interacts with CCAR1 (via N-terminus) and GATA1.

The protein localises to the cytoplasm. It is found in the nucleus. Functionally, functions as a coactivator for aryl hydrocarbon and nuclear receptors (NR). Recruited to promoters through its contact with the N-terminal basic helix-loop-helix-Per-Arnt-Sim (PAS) domain of transcription factors or coactivators, such as NCOA2. During ER-activation acts synergistically in combination with other NCOA2-binding proteins, such as EP300, CREBBP and CARM1. Involved in the transcriptional activation of target genes in the Wnt/CTNNB1 pathway. Functions as a secondary coactivator in LEF1-mediated transcriptional activation via its interaction with CTNNB1. Coactivator function for nuclear receptors and LEF1/CTNNB1 involves differential utilization of two different activation regions. In association with CCAR1 enhances GATA1- and MED1-mediated transcriptional activation from the gamma-globin promoter during erythroid differentiation of K562 erythroleukemia cells. In terms of biological role, seems to enhance inorganic pyrophosphatase thus activating phosphogluomutase (PMG). Probably functions as a component of the calphoglin complex, which is involved in linking cellular metabolism (phosphate and glucose metabolism) with other core functions including protein synthesis and degradation, calcium signaling and cell growth. The polypeptide is Calcium-binding and coiled-coil domain-containing protein 1 (CALCOCO1) (Bos taurus (Bovine)).